A 183-amino-acid chain; its full sequence is Probable actin-related protein 2/3 complex subunit 3 (183 aa).

It belongs to the ARPC3 family. Component of the Arp2/3 complex.

Its subcellular location is the cytoplasm. The protein resides in the cytoskeleton. Its function is as follows. Functions as a component of the Arp2/3 complex which is involved in regulation of actin polymerization and together with an activating nucleation-promoting factor (NPF) mediates the formation of branched actin networks. The polypeptide is Probable actin-related protein 2/3 complex subunit 3 (arx-5) (Caenorhabditis elegans).